We begin with the raw amino-acid sequence, 283 residues long: Pantothenate synthetase (283 aa).

Position 30–37 (30–37 (MGALHRGH)) interacts with ATP. The active-site Proton donor is H37. Q61 serves as a coordination point for (R)-pantoate. Q61 serves as a coordination point for beta-alanine. 147 to 150 (GQKD) is a binding site for ATP. A (R)-pantoate-binding site is contributed by Q153. Residues I176 and 184–187 (MSSR) contribute to the ATP site.

It belongs to the pantothenate synthetase family. Homodimer.

It localises to the cytoplasm. It catalyses the reaction (R)-pantoate + beta-alanine + ATP = (R)-pantothenate + AMP + diphosphate + H(+). The protein operates within cofactor biosynthesis; (R)-pantothenate biosynthesis; (R)-pantothenate from (R)-pantoate and beta-alanine: step 1/1. Its function is as follows. Catalyzes the condensation of pantoate with beta-alanine in an ATP-dependent reaction via a pantoyl-adenylate intermediate. This chain is Pantothenate synthetase, found in Cytophaga hutchinsonii (strain ATCC 33406 / DSM 1761 / CIP 103989 / NBRC 15051 / NCIMB 9469 / D465).